The following is a 1507-amino-acid chain: Transient receptor potential cation channel subfamily M member 2 (1507 aa).

Basic and acidic residues predominate over residues 1-11; sequence MEPLDQRRTDS. The segment at 1–24 is disordered; sequence MEPLDQRRTDSDQEEGFGVQSRRA. Residues 1 to 751 lie on the Cytoplasmic side of the membrane; it reads MEPLDQRRTD…WWGQLCVDNG (751 aa). Residues T173, N178, R301, G332, and T335 each coordinate ADP-D-ribose. At T739 the chain carries Phosphothreonine. An intramembrane segment occupies 752 to 768; sequence LWRIILCMLAFPLLFTG. Topologically, residues 769–793 are cytoplasmic; that stretch reads FISFREKRLQALCRLARVRAFFNAP. A helical transmembrane segment spans residues 794–814; that stretch reads VVIFYLNILSYFAFLCLFAYV. Residues 815–825 lie on the Extracellular side of the membrane; sequence LMVDFQPSPSW. Residues 826–846 traverse the membrane as a helical segment; it reads CEYLIYLWLFSLVCEETRQLF. Ca(2+)-binding residues include E841 and Q844. Over 847–865 the chain is Cytoplasmic; that stretch reads YDPDGCGLMKMASLYFSDF. A helical membrane pass occupies residues 866-886; that stretch reads WNKLDVGAILLFIAGLTCRLI. N867 provides a ligand contact to Ca(2+). Residues 887–894 lie on the Extracellular side of the membrane; that stretch reads PATLYPGR. A helical membrane pass occupies residues 895-915; that stretch reads IILSLDFIMFCLRLMHIFTIS. Residues 916–927 are Cytoplasmic-facing; that stretch reads KTLGPKIIIVKR. The helical transmembrane segment at 928 to 948 threads the bilayer; it reads MMKDVFFFLFLLAVWVVSFGV. Over 949 to 968 the chain is Extracellular; it reads AKQAILIHNESRVDWIFRGV. Residues 969–983 constitute an intramembrane region (pore-forming); the sequence is IYHSYLTIFGQIPTY. Positions 977–980 match the Selectivity filter motif; that stretch reads FGQI. At 984-1020 the chain is on the extracellular side; it reads IDGVNFSMDQCSPNGTDPYKPKCPESDWTGQAPAFPE. An intrachain disulfide couples C994 to C1006. A helical transmembrane segment spans residues 1021–1042; it reads WLTVTLLCLYLLFANILLLNLL. Topologically, residues 1043–1077 are cytoplasmic; sequence IAMFNYTFQEVQEHTDQIWKFQRHDLIEEYHGRPP. E1071 serves as a coordination point for Ca(2+). The stretch at 1078–1096 is an intramembrane region; the sequence is APPPLILLSHLQLLIKRIV. Topologically, residues 1097 to 1507 are cytoplasmic; sequence LKIPAKRHKQ…KVASLFGAHF (411 aa). Residues 1351 to 1502 form the Nudix hydrolase domain; it reads RWKRNQGGGI…KKILQKVASL (152 aa). S1379 contributes to the ADP-D-ribose binding site. A Nudix box motif is present at residues 1387–1408; it reads GSREPGKMLPRKLKQVLQQEYW. ADP-D-ribose-binding residues include D1428, R1430, Y1489, and N1491.

The protein belongs to the transient receptor (TC 1.A.4) family. LTrpC subfamily. TRPM2 sub-subfamily. As to quaternary structure, homotetramer. Post-translationally, phosphorylation of TRPM2 at Thr-739 by protein kinase C (PKC) counteracts the effect of cytosolic Ca(2+) and elevates the temperature threshold. In terms of tissue distribution, detected in pancreas beta-cells. Detected in fetal brain cortex neurons (at protein level).

Its subcellular location is the cell membrane. The protein localises to the perikaryon. It localises to the cell projection. The protein resides in the cytoplasmic vesicle. It is found in the lysosome. It carries out the reaction Ca(2+)(in) = Ca(2+)(out). The catalysed reaction is Na(+)(in) = Na(+)(out). Its activity is regulated as follows. Activated by intracellular ADP-ribose, beta-NAD (NAD(+)) and similar compounds, and by oxidative stress caused by reactive oxygen or nitrogen species. Ca(2+) and PI(4,5)P2 are required for channel opening by ADP-ribose. Activation by ADP-ribose and beta-NAD is strongly increased by moderate heat (35 to 40 degrees Celsius). Likewise, reactive oxygen species lower the threshold for activation by moderate heat (37 degrees Celsius). Activated by moderate heat (35 to 40 degrees Celsius). Inactivated by exposure to extracellular pH between 4.0 and 6.5; irreversibly inactivated when open channels are exposed to extracellular pH between 4.0 and 6.5, while pre-exposure of closed channels to extracellular pH 5.5 gives rise to currents that rapidly inactivate, but protects against irreversible inactivation. Inactivated by intracellular ATP. Activated by arachidonic acid. Inhibited by 2-aminoethyl diphenylborinate (2-APB). In terms of biological role, nonselective, voltage-independent cation channel that mediates Na(+) and Ca(2+) influx, leading to increased cytoplasmic Ca(2+) levels. Functions as a ligand-gated ion channel gated by intracellular adenosine diphosphate ribose (ADP-ribose), Ca(2+), warm temperature, and oxidative stress. The precise physiological activators are under debate; the true, physiological activators may be ADP-ribose and ADP-ribose-2'-phosphate. Binding of ADP-ribose to the cytoplasmic Nudix domain causes a conformation change; the channel is primed but still requires Ca(2+) binding to trigger channel opening. Extracellular Ca(2+) passes through the channel and increases channel activity. Also contributes to Ca(2+) release from intracellular stores in response to ADP-ribose. Plays a role in numerous processes that involve signaling via intracellular Ca(2+) levels. Besides, mediates the release of lysosomal Zn(2+) stores in response to reactive oxygen species, leading to increased cytosolic Zn(2+) levels. Plays a role in insulin secretion, a process that requires increased cytoplasmic Ca(2+) levels. Required for normal IFNG and cytokine secretion and normal innate immune immunity in response to bacterial infection. Required for normal phagocytosis and cytokine release by macrophages exposed to zymosan (in vitro). Plays a role in dendritic cell differentiation and maturation, and in dendritic cell chemotaxis via its role in regulating cytoplasmic Ca(2+) levels. Plays a role in the regulation of the reorganization of the actin cytoskeleton and filopodia formation in response to reactive oxygen species via its function in increasing cytoplasmic Ca(2+) and Zn(2+) levels. Confers susceptibility to cell death following oxidative stress. The protein is Transient receptor potential cation channel subfamily M member 2 of Rattus norvegicus (Rat).